We begin with the raw amino-acid sequence, 217 residues long: Large ribosomal subunit protein uL1 (217 aa).

Position 11 is a phosphotyrosine (Y11). 2 positions are modified to N6-acetyllysine: K91 and K106. K118 bears the N6-acetyllysine; alternate mark. Residue K118 forms a Glycyl lysine isopeptide (Lys-Gly) (interchain with G-Cter in SUMO1); alternate linkage. K118 is covalently cross-linked (Glycyl lysine isopeptide (Lys-Gly) (interchain with G-Cter in SUMO2); alternate). Residue K161 forms a Glycyl lysine isopeptide (Lys-Gly) (interchain with G-Cter in SUMO2) linkage.

Belongs to the universal ribosomal protein uL1 family. Component of the large ribosomal subunit.

The protein localises to the cytoplasm. Functionally, component of the large ribosomal subunit. The ribosome is a large ribonucleoprotein complex responsible for the synthesis of proteins in the cell. In Oryctolagus cuniculus (Rabbit), this protein is Large ribosomal subunit protein uL1 (RPL10A).